Consider the following 64-residue polypeptide: Translation machinery-associated protein 7 homolog (64 aa).

The segment at methionine 1–lysine 64 is disordered. Residues glutamate 21–glycine 50 are a coiled coil. Over residues lysine 32 to lysine 44 the composition is skewed to basic and acidic residues.

The protein belongs to the TMA7 family.

The sequence is that of Translation machinery-associated protein 7 homolog from Anopheles gambiae (African malaria mosquito).